Reading from the N-terminus, the 78-residue chain is MRTLVVLLIGAVLLCSANAFLDELLAESVNDMTDKRACFDKYKSNICGGVISPAHCVRRSGRMAKFAKENCAHFCGFC.

The first 19 residues, 1-19 (MRTLVVLLIGAVLLCSANA), serve as a signal peptide directing secretion. A propeptide spanning residues 20–36 (FLDELLAESVNDMTDKR) is cleaved from the precursor. Residues 38-78 (CFDKYKSNICGGVISPAHCVRRSGRMAKFAKENCAHFCGFC) enclose the ShKT domain. Disulfide bonds link cysteine 38-cysteine 78, cysteine 47-cysteine 71, and cysteine 56-cysteine 75.

Expressed in ganglion neurons residing in the mesoglea (observed in both planulae and primary polyps). Not expressed in nematocytes.

In terms of biological role, probable neuropeptide. The chain is Protein Class8-like from Nematostella vectensis (Starlet sea anemone).